A 441-amino-acid polypeptide reads, in one-letter code: Xaa-Pro dipeptidase (441 aa).

Mn(2+)-binding residues include Asp-244, Asp-255, His-336, Glu-381, and Glu-420.

The protein belongs to the peptidase M24B family. Bacterial-type prolidase subfamily. The cofactor is Mn(2+).

It carries out the reaction Xaa-L-Pro dipeptide + H2O = an L-alpha-amino acid + L-proline. Its function is as follows. Splits dipeptides with a prolyl residue in the C-terminal position. This is Xaa-Pro dipeptidase from Xanthomonas campestris pv. campestris (strain 8004).